The primary structure comprises 422 residues: Anhydromevalonate phosphate decarboxylase (422 aa).

Residues asparagine 134 and glutamate 197 each coordinate Mn(2+). Aspartate 244 acts as the Proton acceptor in catalysis.

It belongs to the UbiD family. Prenylated FMN is required as a cofactor. The cofactor is Mn(2+).

It carries out the reaction (2E)-3-methyl-5-phosphooxypent-2-enoate + H(+) = isopentenyl phosphate + CO2. Its pathway is isoprenoid biosynthesis; isopentenyl diphosphate biosynthesis via mevalonate pathway. In terms of biological role, catalyzes the conversion of trans-anhydromevalonate 5-phosphate (tAHMP) into isopentenyl phosphate. Involved in the archaeal mevalonate (MVA) pathway, which provides fundamental precursors for isoprenoid biosynthesis, such as isopentenyl diphosphate (IPP) and dimethylallyl diphosphate (DMAPP). The polypeptide is Anhydromevalonate phosphate decarboxylase (Methanosarcina mazei (strain ATCC BAA-159 / DSM 3647 / Goe1 / Go1 / JCM 11833 / OCM 88) (Methanosarcina frisia)).